Reading from the N-terminus, the 692-residue chain is Meiotic sister-chromatid recombination protein 6, mitochondrial (692 aa).

A mitochondrion-targeting transit peptide spans 1–30; the sequence is MLSHNALRAFDCSKVIISRRCLTSSTSIYQ.

It localises to the mitochondrion. May be involved in the control of meiotic sister-chromatid recombination. The protein is Meiotic sister-chromatid recombination protein 6, mitochondrial (MSC6) of Saccharomyces cerevisiae (strain ATCC 204508 / S288c) (Baker's yeast).